We begin with the raw amino-acid sequence, 371 residues long: GTPase Obg (371 aa).

The 159-residue stretch at 1–159 (MKFVDEAYID…KNLKLELKVL (159 aa)) folds into the Obg domain. Residues 160 to 334 (ADVGLLGMPN…LIRTIYKHVH (175 aa)) enclose the OBG-type G domain. Residues 166–173 (GMPNAGKS), 191–195 (FTTLH), 213–216 (DIPG), 284–287 (NKLD), and 315–317 (SAL) each bind GTP. The Mg(2+) site is built by S173 and T193.

The protein belongs to the TRAFAC class OBG-HflX-like GTPase superfamily. OBG GTPase family. Monomer. Mg(2+) serves as cofactor.

The protein localises to the cytoplasm. In terms of biological role, an essential GTPase which binds GTP, GDP and possibly (p)ppGpp with moderate affinity, with high nucleotide exchange rates and a fairly low GTP hydrolysis rate. Plays a role in control of the cell cycle, stress response, ribosome biogenesis and in those bacteria that undergo differentiation, in morphogenesis control. In Delftia acidovorans (strain DSM 14801 / SPH-1), this protein is GTPase Obg.